The following is a 261-amino-acid chain: Mlc titration factor A (261 aa).

Zn(2+)-binding residues include His111, His148, His152, and Glu211.

This sequence belongs to the MtfA family. As to quaternary structure, interacts with Mlc. The cofactor is Zn(2+).

It is found in the cytoplasm. In terms of biological role, involved in the modulation of the activity of the glucose-phosphotransferase system (glucose-PTS). Interacts with the transcriptional repressor Mlc, preventing its interaction with DNA and leading to the modulation of expression of genes regulated by Mlc, including ptsG, which encodes the PTS system glucose-specific EIICB component. Functionally, shows zinc-dependent metallopeptidase activity. The polypeptide is Mlc titration factor A (Edwardsiella ictaluri (strain 93-146)).